A 717-amino-acid polypeptide reads, in one-letter code: P-loop NTPase domain-containing protein LPA1 homolog 2 (717 aa).

Disordered stretches follow at residues 235 to 259 (KKLK…SSTT) and 532 to 629 (HYSS…DTIS). Composition is skewed to polar residues over residues 243 to 259 (VNSN…SSTT) and 532 to 545 (HYSS…TSDG). Positions 559–582 (SDEDDEEGDDDFHEPDSDEDLSDN) are enriched in acidic residues. Residues 583–602 (NDERNRDEIGSVDEESTKSD) show a composition bias toward basic and acidic residues.

May be not required for the accumulation of phytic acid in seeds. Phytic acid is the primary storage form of phosphorus in cereal grains and other plant seeds. The protein is P-loop NTPase domain-containing protein LPA1 homolog 2 of Arabidopsis thaliana (Mouse-ear cress).